Consider the following 204-residue polypeptide: Ribonuclease HII (204 aa).

The RNase H type-2 domain occupies 8–197; that stretch reads RLICGVDEAG…VRELLQNPPL (190 aa). The a divalent metal cation site is built by D14, E15, and D106.

This sequence belongs to the RNase HII family. Mn(2+) serves as cofactor. It depends on Mg(2+) as a cofactor.

The protein localises to the cytoplasm. It catalyses the reaction Endonucleolytic cleavage to 5'-phosphomonoester.. Its function is as follows. Endonuclease that specifically degrades the RNA of RNA-DNA hybrids. The protein is Ribonuclease HII of Azoarcus sp. (strain BH72).